The sequence spans 526 residues: Peptide chain release factor 3 (526 aa).

A tr-type G domain is found at 9–277 (DKRRTFAIIS…GIVEWAPKPQ (269 aa)). Residues 18 to 25 (SHPDAGKT), 86 to 90 (DTPGH), and 140 to 143 (NKLD) contribute to the GTP site.

The protein belongs to the TRAFAC class translation factor GTPase superfamily. Classic translation factor GTPase family. PrfC subfamily.

The protein localises to the cytoplasm. Increases the formation of ribosomal termination complexes and stimulates activities of RF-1 and RF-2. It binds guanine nucleotides and has strong preference for UGA stop codons. It may interact directly with the ribosome. The stimulation of RF-1 and RF-2 is significantly reduced by GTP and GDP, but not by GMP. This chain is Peptide chain release factor 3, found in Shewanella woodyi (strain ATCC 51908 / MS32).